Reading from the N-terminus, the 126-residue chain is Phosphoribosyl-AMP cyclohydrolase (126 aa).

Residue aspartate 76 coordinates Mg(2+). Residue cysteine 77 participates in Zn(2+) binding. Mg(2+) contacts are provided by aspartate 78 and aspartate 80. 2 residues coordinate Zn(2+): cysteine 94 and cysteine 101.

The protein belongs to the PRA-CH family. Homodimer. Mg(2+) is required as a cofactor. It depends on Zn(2+) as a cofactor.

It localises to the cytoplasm. It carries out the reaction 1-(5-phospho-beta-D-ribosyl)-5'-AMP + H2O = 1-(5-phospho-beta-D-ribosyl)-5-[(5-phospho-beta-D-ribosylamino)methylideneamino]imidazole-4-carboxamide. It participates in amino-acid biosynthesis; L-histidine biosynthesis; L-histidine from 5-phospho-alpha-D-ribose 1-diphosphate: step 3/9. Its function is as follows. Catalyzes the hydrolysis of the adenine ring of phosphoribosyl-AMP. This Ruthia magnifica subsp. Calyptogena magnifica protein is Phosphoribosyl-AMP cyclohydrolase.